Reading from the N-terminus, the 159-residue chain is Globin CTT-W (159 aa).

An N-terminal signal peptide occupies residues 1 to 16 (MKFLVILTLCIAGAIA). The Globin domain occupies 17 to 159 (HCDKAPFIKA…HHAIVYSILE (143 aa)). Heme b is bound by residues His-73 and His-108.

This sequence belongs to the globin family.

This is Globin CTT-W (CTT-W) from Chironomus thummi thummi (Midge).